We begin with the raw amino-acid sequence, 322 residues long: Transmembrane and ubiquitin-like domain-containing protein 2 (322 aa).

The chain crosses the membrane as a helical span at residues Val38–Val58. The disordered stretch occupies residues Val88–Pro168. The span at Glu115–Val130 shows a compositional bias: gly residues. Positions Ile174 to Ser247 constitute a Ubiquitin-like domain. 2 consecutive transmembrane segments (helical) span residues Leu267 to Trp287 and Phe296 to Val316.

Its subcellular location is the membrane. This Bos taurus (Bovine) protein is Transmembrane and ubiquitin-like domain-containing protein 2 (TMUB2).